A 367-amino-acid polypeptide reads, in one-letter code: S-adenosylmethionine decarboxylase proenzyme 3 (367 aa).

Active-site residues include Glu9 and Glu12. The Schiff-base intermediate with substrate; via pyruvic acid role is filled by Ser69. Ser69 carries the pyruvic acid (Ser); by autocatalysis modification. The active-site Proton donor; for catalytic activity is Cys83. Catalysis depends on proton acceptor; for processing activity residues Ser234 and His247.

It belongs to the eukaryotic AdoMetDC family. Pyruvate is required as a cofactor. Is synthesized initially as an inactive proenzyme. Formation of the active enzyme involves a self-maturation process in which the active site pyruvoyl group is generated from an internal serine residue via an autocatalytic post-translational modification. Two non-identical subunits are generated from the proenzyme in this reaction, and the pyruvate is formed at the N-terminus of the alpha chain, which is derived from the carboxyl end of the proenzyme. The post-translation cleavage follows an unusual pathway, termed non-hydrolytic serinolysis, in which the side chain hydroxyl group of the serine supplies its oxygen atom to form the C-terminus of the beta chain, while the remainder of the serine residue undergoes an oxidative deamination to produce ammonia and the pyruvoyl group blocking the N-terminus of the alpha chain.

The enzyme catalyses S-adenosyl-L-methionine + H(+) = S-adenosyl 3-(methylsulfanyl)propylamine + CO2. It participates in amine and polyamine biosynthesis; S-adenosylmethioninamine biosynthesis; S-adenosylmethioninamine from S-adenosyl-L-methionine: step 1/1. The polypeptide is S-adenosylmethionine decarboxylase proenzyme 3 (SAMDC3) (Brassica juncea (Indian mustard)).